We begin with the raw amino-acid sequence, 382 residues long: L-lysine 4-hydroxylase (382 aa).

Fe cation is bound by residues His182, Glu184, and His318.

It belongs to the clavaminate synthase family. Fe(2+) is required as a cofactor.

The enzyme catalyses L-lysine + 2-oxoglutarate + O2 = (4R)-4-hydroxy-L-lysine + succinate + CO2. Functionally, alpha-ketoglutarate-dependent dioxygenase that in vitro catalyzes the regio- and stereoselective hydroxylation of L-lysine, leading to (4R)-4-hydroxy-L-lysine. Cannot use D-lysine or L-ornithine as substrate. The chain is L-lysine 4-hydroxylase from Chitinophaga pinensis (strain ATCC 43595 / DSM 2588 / LMG 13176 / NBRC 15968 / NCIMB 11800 / UQM 2034).